Here is a 361-residue protein sequence, read N- to C-terminus: Isopentenyl-diphosphate delta-isomerase (361 aa).

12 to 13 lines the substrate pocket; that stretch reads RK. Residues serine 70, 71-73, serine 101, and asparagine 130 contribute to the FMN site; that span reads SMT. Residue 101-103 participates in substrate binding; sequence SMR. Substrate is bound at residue glutamine 165. Position 166 (glutamate 166) interacts with Mg(2+). FMN-binding positions include lysine 197 and 310 to 311; that span reads AG.

Belongs to the IPP isomerase type 2 family. Homooctamer. Dimer of tetramers. FMN is required as a cofactor. Requires NADPH as cofactor. The cofactor is Mg(2+).

The protein resides in the cytoplasm. The enzyme catalyses isopentenyl diphosphate = dimethylallyl diphosphate. Involved in the biosynthesis of isoprenoids. Catalyzes the 1,3-allylic rearrangement of the homoallylic substrate isopentenyl (IPP) to its allylic isomer, dimethylallyl diphosphate (DMAPP). The chain is Isopentenyl-diphosphate delta-isomerase from Chlorobium luteolum (strain DSM 273 / BCRC 81028 / 2530) (Pelodictyon luteolum).